The primary structure comprises 447 residues: Guanine nucleotide-binding protein alpha-1 subunit (447 aa).

Gly2 is lipidated: N-myristoyl glycine. The S-palmitoyl cysteine moiety is linked to residue Cys3. Residues 40 to 447 (NEVKLLLLGA…QQNLKKSGIL (408 aa)) enclose the G-alpha domain. The G1 motif stretch occupies residues 43 to 56 (KLLLLGAGESGKST). GTP is bound by residues Glu51, Ser52, Gly53, Lys54, Ser55, Thr56, Leu269, Thr275, Gly297, Asn363, Lys364, Asp366, and Ala419. Ser55 is a binding site for Mg(2+). The tract at residues 267–275 (DILKGRIKT) is G2 motif. Thr275 is a binding site for Mg(2+). The tract at residues 290-299 (FKVYDAGGQR) is G3 motif. Residues 359-366 (ILFLNKVD) form a G4 motif region. The G5 motif stretch occupies residues 417–422 (TCATDT).

The protein belongs to the G-alpha family. As to quaternary structure, g proteins are composed of 3 units; alpha, beta and gamma. The alpha chain contains the guanine nucleotide binding site. Requires Mg(2+) as cofactor.

Its function is as follows. Guanine nucleotide-binding proteins (G proteins) are involved as modulators or transducers in various transmembrane signaling systems. This protein is involved in the mating response pathway. This Kluyveromyces lactis (strain ATCC 8585 / CBS 2359 / DSM 70799 / NBRC 1267 / NRRL Y-1140 / WM37) (Yeast) protein is Guanine nucleotide-binding protein alpha-1 subunit (GPA1).